We begin with the raw amino-acid sequence, 217 residues long: 7-cyano-7-deazaguanine synthase (217 aa).

10-20 (FSGGQDSTTCL) serves as a coordination point for ATP. Residues C185, C194, C197, and C200 each coordinate Zn(2+).

Belongs to the QueC family. In terms of assembly, homodimer. Requires Zn(2+) as cofactor.

It catalyses the reaction 7-carboxy-7-deazaguanine + NH4(+) + ATP = 7-cyano-7-deazaguanine + ADP + phosphate + H2O + H(+). Its pathway is purine metabolism; 7-cyano-7-deazaguanine biosynthesis. In terms of biological role, catalyzes the ATP-dependent conversion of 7-carboxy-7-deazaguanine (CDG) to 7-cyano-7-deazaguanine (preQ(0)). In Streptococcus mutans serotype c (strain ATCC 700610 / UA159), this protein is 7-cyano-7-deazaguanine synthase.